Consider the following 949-residue polypeptide: Glycine dehydrogenase (decarboxylating) (949 aa).

An N6-(pyridoxal phosphate)lysine modification is found at Lys702.

It belongs to the GcvP family. The glycine cleavage system is composed of four proteins: P, T, L and H. Pyridoxal 5'-phosphate serves as cofactor.

The enzyme catalyses N(6)-[(R)-lipoyl]-L-lysyl-[glycine-cleavage complex H protein] + glycine + H(+) = N(6)-[(R)-S(8)-aminomethyldihydrolipoyl]-L-lysyl-[glycine-cleavage complex H protein] + CO2. The glycine cleavage system catalyzes the degradation of glycine. The P protein binds the alpha-amino group of glycine through its pyridoxal phosphate cofactor; CO(2) is released and the remaining methylamine moiety is then transferred to the lipoamide cofactor of the H protein. This Rhodococcoides fascians (Rhodococcus fascians) protein is Glycine dehydrogenase (decarboxylating).